A 423-amino-acid polypeptide reads, in one-letter code: Phosphoribosylamine--glycine ligase (423 aa).

Residues 107-312 (KAFADRYGLP…LVPYLVACAN (206 aa)) enclose the ATP-grasp domain. 133-193 (LELFEPPYVI…EEFLEGEIGS (61 aa)) is a binding site for ATP. Residues E270, E282, and N284 each coordinate Mg(2+). Residues E270, E282, and N284 each coordinate Mn(2+).

It belongs to the GARS family. Mg(2+) is required as a cofactor. Mn(2+) serves as cofactor.

The catalysed reaction is 5-phospho-beta-D-ribosylamine + glycine + ATP = N(1)-(5-phospho-beta-D-ribosyl)glycinamide + ADP + phosphate + H(+). It participates in purine metabolism; IMP biosynthesis via de novo pathway; N(1)-(5-phospho-D-ribosyl)glycinamide from 5-phospho-alpha-D-ribose 1-diphosphate: step 2/2. The protein is Phosphoribosylamine--glycine ligase of Phenylobacterium zucineum (strain HLK1).